Consider the following 1428-residue polypeptide: MSTEPVSASDKYQKISQLEHILKRPDTYIGSVETQEQLQWIYDEETDCMIEKNVTIVPGLFKIFDEILVNAADNKVRDPSMKRIDVNIHAEEHTIEVKNDGKGIPIEIHNKENIYIPEMIFGHLLTSSNYDDDEKKVTGGRNGYGAKLCNIFSTEFILETADLNVGQKYVQKWENNMSICHPPKITSYKKGPSYTKVTFKPDLTRFGMKELDNDILGVMRRRVYDINGSVRDINVYLNGKSLKIRNFKNYVELYLKSLEKKRQLDNGEDGAAKSDIPTILYERINNRWEVAFAVSDISFQQISFVNSIATTMGGTHVNYITDQIVKKISEILKKKKKKSVKSFQIKNNMFIFINCLIENPAFTSQTKEQLTTRVKDFGSRCEIPLEYINKIMKTDLATRMFEIADANEENALKKSDGTRKSRITNYPKLEDANKAGTKEGYKCTLVLTEGDSALSLAVAGLAVVGRDYYGCYPLRGKMLNVREASADQILKNAEIQAIKKIMGLQHRKKYEDTKSLRYGHLMIMTDQDHDGSHIKGLIINFLESSFPGLLDIQGFLLEFITPIIKVSITKPTKNTIAFYNMPDYEKWREEESHKFTWKQKYYKGLGTSLAQEVREYFSNLDRHLKIFHSLQGNDKDYIDLAFSKKKADDRKEWLRQYEPGTVLDPTLKEIPISDFINKELILFSLADNIRSIPNVLDGFKPGQRKVLYGCFKKNLKSELKVAQLAPYVSECTAYHHGEQSLAQTIIGLAQNFVGSNNIYLLLPNGAFGTRATGGKDAAAARYIYTELNKLTRKIFHPADDPLYKYIQEDEKTVEPEWYLPILPMILVNGAEGIGTGWSTYIPPFNPLEIIKNIRHLMNDEELEQMHPWFRGWTGTIEEIEPLRYRMYGRIEQIGDNVLEITELPARTWTSTIKEYLLLGLSGNDKIKPWIKDMEEQHDDNIKFIITLSPEEMAKTRKIGFYERFKLISPISLMNMVAFDPHGKIKKYNSVNEILSEFYYVRLEYYQKRKDHMSERLQWEVEKYSFQVKFIKMIIEKELTVTNKPRNAIIQELENLGFPRFNKEGKPYYGSPNDEIAEQINDVKGATSDEEDEESSHEDTENVINGPEELYGTYEYLLGMRIWSLTKERYQKLLKQKQEKETELENLLKLSAKDIWNTDLKAFEVGYQEFLQRDAEARGGNVPNKGSKTKGKGKRKLVDDEDYDPSKKNKKSTARKGKKIKLEDKNFERILLEQKLVTKSKAPTKIKKEKTPSVSETKTEEEENAPSSTSSSSIFDIKKEDKDEGELSKISNKFKKISTIFDKMGSTSATSKENTPEQDDVATKKNQTTAKKTAVKPKLAKKPVRKQQKVVELSGESDLEILDSYTDREDSNKDEDDAIPQRSRRQRSSRAASVPKKSYVETLELSDDSFIEDDEEENQGSDVSFNEED.

Residues N70, N99, 127–129, and 140–147 each bind ATP; these read SSN and GRNGYGAK. The tract at residues 333–336 is interaction with DNA; that stretch reads KKKK. 365–367 contacts ATP; that stretch reads QTK. Residues 443–557 form the Toprim domain; that stretch reads CTLVLTEGDS…GLLDIQGFLL (115 aa). Mg(2+)-binding residues include E449, D526, and D528. In terms of domain architecture, Topo IIA-type catalytic spans 692–1159; that stretch reads IPNVLDGFKP…SAKDIWNTDL (468 aa). The active-site O-(5'-phospho-DNA)-tyrosine intermediate is Y782. The interaction with DNA stretch occupies residues 965–974; sequence KLISPISLMN. Disordered regions lie at residues 1083–1102, 1176–1217, 1240–1288, and 1303–1428; these read KGATSDEEDEESSHEDTENV, ARGG…RKGK, KAPT…ELSK, and MGST…NEED. T1086 carries the phosphothreonine; by CK2 modification. Residue S1087 is modified to Phosphoserine; by CK2. A compositionally biased stretch (basic residues) spans 1207–1217; the sequence is KNKKSTARKGK. S1252 bears the Phosphoserine mark. Residue T1258 is modified to Phosphothreonine; by CK2. 3 positions are modified to phosphoserine; by CK2: S1266, S1269, and S1272. Positions 1275–1286 are enriched in basic and acidic residues; that stretch reads DIKKEDKDEGEL. The span at 1332-1347 shows a compositional bias: basic residues; that stretch reads TAVKPKLAKKPVRKQQ. Phosphoserine; by CK2 is present on residues S1353, S1356, S1408, and S1423. A compositionally biased stretch (acidic residues) spans 1403–1428; the sequence is ELSDDSFIEDDEEENQGSDVSFNEED.

The protein belongs to the type II topoisomerase family. In terms of assembly, homodimer. Requires Mg(2+) as cofactor. It depends on Mn(2+) as a cofactor. Ca(2+) is required as a cofactor. Phosphorylation enhances the activity. Stimulates decatenation activity.

Its subcellular location is the nucleus. The catalysed reaction is ATP-dependent breakage, passage and rejoining of double-stranded DNA.. Functionally, control of topological states of DNA by transient breakage and subsequent rejoining of DNA strands. Topoisomerase II makes double-strand breaks. Essential during mitosis and meiosis for proper segregation of daughter chromosomes. This Saccharomyces cerevisiae (strain ATCC 204508 / S288c) (Baker's yeast) protein is DNA topoisomerase 2 (TOP2).